The primary structure comprises 1117 residues: MNALQQKCRPKHQVLVLKCYPRTAKGAVDVKPNSSELSYLLYYATSRRSKIQKIGAFLEKKTASDVWRLRIGNVQVTLQILSALMEKLHKDSVLIAPFVLKILDTVLRSDDITMIESSLPTFGAFCDYHDAAFLLADQTYLRQYEEIVRLYAQLASTAAPGRESLTTPVKVRWRNAGLEAIRSVSTADALSSITGSQMHVIMPRILENLWSDTPDFLEILHQRLEEEEKVDTEKQLRRRTSIATVGTDGANDPNPVALSGTAGDVDKLAEEEVGVLAMQCLKSIFIVPTRAQIHGATVSLLKFIQEKVAQGNSVVELHDDRERDNGWAISIYGIIARWAPVQDRYTILVAALETLLRIPAQDATLDEQLALVTIMSSLLRSDVNLIGLSMMDVLLGLIKQMRKLFRLRSPASRSDDGNVATAESDTAVRQKNKHLVGRLELCIGDLATHVYYADQIADMVSAIILRLKPSRASSINSSPGGEKNGNEAGPGASTVELSESQQFDHYFCISTGRASGLRAIKEILLVANPQKKLTGNLAMSRNPVPIHVWEGTHWLLRDPDGHVRKAYMEAIVTWLDRETSFASEIAVEEKLPRSRSSIKMSKEASSGINRRAVSNASHRERGSKPRPSQFLALLHLVIYDNALQYVDFETDLVLLHILLTRLVLQLGVNAARYGLPMIYRLQEDVQEIETPLHKVRIAALCHGYFWALSEKFDFKESDIGQAIESEVARRKRKAFWVQGINMPPPSLDQVGIPGEALPQPDWDSASLEREELLPFDDREALVESVVARYHESLQAPPGSPGSPGRNPSGPILGSSLTSTGQADSDVELPVVFREHMLGDWSRDAAAAMLAAAGKSESLTGSKTETTGTRGHLTVKTNGMNGNGLTNGHGPTSPYGSQYNLMRPHSSHGHREKEREGTIPRHRKGSVRSAHSPAALSTGNRGTVASVDQLKLVLSGNPPPKTAGLAGDDDSGDSMVSYDYSLSDMSFNPATQNDQPGSPTSVKRPGTSSKRGPLNTHPPLGGAPNLHEEQNGDGSVPPVPPMPDMNMLGGKRSPIQAMENSFQEKGRRRSLNSRNGDGMRPKSVRSQETKTMDLQDLLRGIDSRPSEGSLGNVTRPPY.

Disordered regions lie at residues Ser-473–Thr-494, Ser-601–Pro-625, Ser-792–Ala-822, and Gly-853–Tyr-1117. A compositionally biased stretch (polar residues) spans Ser-601–Ala-616. Residues Glu-856–Thr-868 are compositionally biased toward polar residues. Over residues Gly-908–Ile-918 the composition is skewed to basic and acidic residues. Residues Ser-982–Lys-1009 show a composition bias toward polar residues. Basic and acidic residues predominate over residues Asp-1076–Asp-1092.

Belongs to the EFR3 family.

The protein is Protein EFR3 (EFR3) of Gibberella zeae (strain ATCC MYA-4620 / CBS 123657 / FGSC 9075 / NRRL 31084 / PH-1) (Wheat head blight fungus).